Reading from the N-terminus, the 152-residue chain is Ribosome maturation factor RimP (152 aa).

This sequence belongs to the RimP family.

The protein localises to the cytoplasm. Its function is as follows. Required for maturation of 30S ribosomal subunits. This Photorhabdus laumondii subsp. laumondii (strain DSM 15139 / CIP 105565 / TT01) (Photorhabdus luminescens subsp. laumondii) protein is Ribosome maturation factor RimP.